Consider the following 356-residue polypeptide: Heat-inducible transcription repressor HrcA (356 aa).

This sequence belongs to the HrcA family.

Negative regulator of class I heat shock genes (grpE-dnaK-dnaJ and groELS operons). Prevents heat-shock induction of these operons. The sequence is that of Heat-inducible transcription repressor HrcA from Chlorobaculum parvum (strain DSM 263 / NCIMB 8327) (Chlorobium vibrioforme subsp. thiosulfatophilum).